We begin with the raw amino-acid sequence, 232 residues long: 2-C-methyl-D-erythritol 4-phosphate cytidylyltransferase (232 aa).

This sequence belongs to the IspD/TarI cytidylyltransferase family. IspD subfamily.

The catalysed reaction is 2-C-methyl-D-erythritol 4-phosphate + CTP + H(+) = 4-CDP-2-C-methyl-D-erythritol + diphosphate. The protein operates within isoprenoid biosynthesis; isopentenyl diphosphate biosynthesis via DXP pathway; isopentenyl diphosphate from 1-deoxy-D-xylulose 5-phosphate: step 2/6. Its function is as follows. Catalyzes the formation of 4-diphosphocytidyl-2-C-methyl-D-erythritol from CTP and 2-C-methyl-D-erythritol 4-phosphate (MEP). This chain is 2-C-methyl-D-erythritol 4-phosphate cytidylyltransferase, found in Neorickettsia sennetsu (strain ATCC VR-367 / Miyayama) (Ehrlichia sennetsu).